A 79-amino-acid chain; its full sequence is MEGSIKNCTQCDEASYDILDADSLRTCEALVRQKIDFEEIYIKQHNDRLLFKDMNKVVEVLERKTVLVTLKTYPTRNPH.

The protein localises to the mitochondrion. This is an uncharacterized protein from Marchantia polymorpha (Common liverwort).